Reading from the N-terminus, the 116-residue chain is Ribosome-binding factor A (116 aa).

Belongs to the RbfA family. In terms of assembly, monomer. Binds 30S ribosomal subunits, but not 50S ribosomal subunits or 70S ribosomes.

It is found in the cytoplasm. Its function is as follows. One of several proteins that assist in the late maturation steps of the functional core of the 30S ribosomal subunit. Associates with free 30S ribosomal subunits (but not with 30S subunits that are part of 70S ribosomes or polysomes). Required for efficient processing of 16S rRNA. May interact with the 5'-terminal helix region of 16S rRNA. This chain is Ribosome-binding factor A, found in Chlorobium phaeobacteroides (strain DSM 266 / SMG 266 / 2430).